The sequence spans 77 residues: MKFSMRLISAVLFLVMIFVATGMGPVTVEARTCASQSQRFKGKCVSDTNCENVCHNEGFPGGDCRGFRRRCFCTRNC.

A signal peptide spans 1–30; sequence MKFSMRLISAVLFLVMIFVATGMGPVTVEA. Cystine bridges form between Cys-33-Cys-77, Cys-44-Cys-64, Cys-50-Cys-71, and Cys-54-Cys-73.

Belongs to the DEFL family. In terms of tissue distribution, expressed in roots, siliques and seeds.

The protein resides in the secreted. Confers broad-spectrum resistance to pathogens. This is Defensin-like protein 4 (PDF2.1) from Arabidopsis thaliana (Mouse-ear cress).